We begin with the raw amino-acid sequence, 1020 residues long: Calcium-transporting ATPase 1 (1020 aa).

M1 bears the N-acetylmethionine mark. The Stromal segment spans residues 1 to 162; the sequence is MESYLNENFG…NQFTESPSRG (162 aa). Positions 21–32 are interaction with calmodulin; the sequence is ALQRWRKLCWIV. S46 is subject to Phosphoserine; by CPK. A helical transmembrane segment spans residues 163–183; the sequence is FWLFVWEALQDTTLMILAACA. Topologically, residues 184–201 are lumenal; the sequence is FVSLIVGILMEGWPIGAH. Residues 202–222 form a helical membrane-spanning segment; it reads DGLGIVASILLVVFVTATSDY. The Stromal portion of the chain corresponds to 223–350; sequence RQSLQFKDLD…DDETPLQVKL (128 aa). The helical transmembrane segment at 351–370 threads the bilayer; that stretch reads NGVATIIGKIGLFFAVITFA. Over 371-400 the chain is Lumenal; sequence VLVQGLANQKRLDNSHWIWTADELMAMLEY. Residues 401–418 traverse the membrane as a helical segment; sequence FAVAVTIVVVAVPEGLPL. Topologically, residues 419–813 are stromal; the sequence is AVTLSLAFAM…KWGRSVYINI (395 aa). The active-site 4-aspartylphosphate intermediate is D456. Residues D758 and D762 each coordinate Mg(2+). A helical membrane pass occupies residues 814-832; that stretch reads QKFVQFQLTVNVVALIVNF. Residues 833–843 are Lumenal-facing; sequence LSACLTGNAPL. A helical transmembrane segment spans residues 844-864; sequence TAVQLLWVNMIMDTLGALALA. Residues 865-884 are Stromal-facing; the sequence is TEPPQDDLMKRSPVGRKGNF. A helical membrane pass occupies residues 885 to 907; it reads ISNVMWRNILGQSLYQLVIIWCL. Over 908–919 the chain is Lumenal; the sequence is QTKGKTMFGLDG. A helical membrane pass occupies residues 920–941; that stretch reads PDSDLTLNTLIFNIFVFCQVFN. Residues 942–959 lie on the Stromal side of the membrane; that stretch reads EISSREMEKIDVFKGILK. The helical transmembrane segment at 960–981 threads the bilayer; the sequence is NYVFVAVLTCTVVFQVIIIELL. The Lumenal segment spans residues 982-991; that stretch reads GTFADTTPLN. The helical transmembrane segment at 992-1013 threads the bilayer; that stretch reads LGQWLVSIILGFLGMPVAAALK. Residues 1014–1020 lie on the Stromal side of the membrane; it reads MIPVGSH.

The protein belongs to the cation transport ATPase (P-type) (TC 3.A.3) family. Type IIB subfamily. As to expression, expressed at higher levels in roots than in leaves.

It is found in the plastid. The protein localises to the chloroplast inner membrane. It catalyses the reaction Ca(2+)(in) + ATP + H2O = Ca(2+)(out) + ADP + phosphate + H(+). Activated by calmodulin. This magnesium-dependent enzyme catalyzes the hydrolysis of ATP coupled with the translocation of calcium from the cytosol out of the cell or into organelles. This chain is Calcium-transporting ATPase 1 (ACA1), found in Arabidopsis thaliana (Mouse-ear cress).